The chain runs to 219 residues: Ras-related protein Rab-32A (219 aa).

22–29 (GDIGTGKT) lines the GTP pocket. An Effector region motif is present at residues 44 to 52 (YKSTIGVDF). GTP contacts are provided by residues 71–75 (DIAGQ) and 134–137 (NKCD). Residues 192-219 (NQPIEGTIQPGDLNKQPQPTSTGPSCCK) are disordered. Residues 206–219 (KQPQPTSTGPSCCK) are compositionally biased toward polar residues. 2 S-geranylgeranyl cysteine lipidation sites follow: Cys217 and Cys218.

This sequence belongs to the small GTPase superfamily. Rab family.

The protein is Ras-related protein Rab-32A (rab32A) of Dictyostelium discoideum (Social amoeba).